The primary structure comprises 727 residues: MNPTVIDAALARSFGLAAEEYDRVLAIMGRVPTLTELGIFSVMWSEHCSYKSSRIWLKTLPTTAPWVIHGPGENAGVVDIGEGRAAIFKMESHNHPSFIEPYQGAATGVGGILRDVFTMGARPVANLNALRFGDPSLPVTKRVVDGVVRGIGGYGNCVGVPTVGGETNFHPSYNGNPLVNAMTVGIADQDRIFLSAAAGIGNPVVYVGSKTGRDGIHGATMASAEFGADAEEKRPTVQVGDPFIEKLLIEACLELMATDAIVAIQDMGAAGLTSSSVEMAGKGGVGIELDLDSVPQREAGMSAYEMMLSESQERMLIVLKPGREDMARAIFEKWELDFAVIGRITDSGRIVVKHQGRTEADIELAPLADQAPLYERPWVEPAKPAPLGPVESPLPPGAALLALIGCPDLASRAWIWNQYDGTVGGQTLRRPGQADAAIVRIEGSRRALALTTDCTPRYCVADPETGGAQAVVESWRNITATGATPLAVTDNLNFGNPEKPAIMGQIVAAIRGMGEACRALDYPIVSGNVSLYNETEGTAILPTPAIGGLGVIDDGAAATGIALAPGLDLVLIGETSGELGASLFLREILRREDGAPPALDLAAEKRNGDFVRRQIHAGAIAACHDVSDGGLLVALAEMALAGNTGIALAAIPEGIAPHAFWFGEDQARYVAATADGAALIAEAAAAGIPARPLGRSGGDHLTGPDGIAISLSEIRAAHEAFFARWFA.

H47 is a catalytic residue. ATP is bound by residues Y50 and K89. Position 91 (E91) interacts with Mg(2+). Substrate-binding positions include 92–95 (SHNH) and R114. The active-site Proton acceptor is H93. D115 lines the Mg(2+) pocket. Q238 contacts substrate. Position 266 (D266) interacts with Mg(2+). 310–312 (ESQ) contributes to the substrate binding site. Residues D490 and G527 each coordinate ATP. Residue N528 coordinates Mg(2+). Position 530 (S530) interacts with substrate.

It belongs to the FGAMS family. In terms of assembly, monomer. Part of the FGAM synthase complex composed of 1 PurL, 1 PurQ and 2 PurS subunits.

The protein localises to the cytoplasm. It catalyses the reaction N(2)-formyl-N(1)-(5-phospho-beta-D-ribosyl)glycinamide + L-glutamine + ATP + H2O = 2-formamido-N(1)-(5-O-phospho-beta-D-ribosyl)acetamidine + L-glutamate + ADP + phosphate + H(+). It participates in purine metabolism; IMP biosynthesis via de novo pathway; 5-amino-1-(5-phospho-D-ribosyl)imidazole from N(2)-formyl-N(1)-(5-phospho-D-ribosyl)glycinamide: step 1/2. Its function is as follows. Part of the phosphoribosylformylglycinamidine synthase complex involved in the purines biosynthetic pathway. Catalyzes the ATP-dependent conversion of formylglycinamide ribonucleotide (FGAR) and glutamine to yield formylglycinamidine ribonucleotide (FGAM) and glutamate. The FGAM synthase complex is composed of three subunits. PurQ produces an ammonia molecule by converting glutamine to glutamate. PurL transfers the ammonia molecule to FGAR to form FGAM in an ATP-dependent manner. PurS interacts with PurQ and PurL and is thought to assist in the transfer of the ammonia molecule from PurQ to PurL. In Acidiphilium cryptum (strain JF-5), this protein is Phosphoribosylformylglycinamidine synthase subunit PurL.